The primary structure comprises 88 residues: N(2)-fixation sustaining protein CowN (88 aa).

Belongs to the CowN family.

Functionally, is required to sustain N(2)-dependent growth in the presence of low levels of carbon monoxide (CO). Probably acts by protecting the N(2) fixation ability of the nitrogenase complex, which is inactivated in the presence of CO. In Rhodomicrobium vannielii (strain ATCC 17100 / DSM 162 / LMG 4299 / NCIMB 10020 / ATH 3.1.1), this protein is N(2)-fixation sustaining protein CowN.